The primary structure comprises 613 residues: Laccase 1 (613 aa).

The signal sequence occupies residues 1 to 20; that stretch reads MSRFARLLLIVALFFTNAWA. Plastocyanin-like domains lie at 29–142 and 171–359; these read ITWK…IRPK and YLVV…MRIP. The N-linked (GlcNAc...) asparagine glycan is linked to N74. Cu cation contacts are provided by H78, H80, H122, and H124. 5 N-linked (GlcNAc...) asparagine glycosylation sites follow: N256, N279, N444, N468, and N484. The Plastocyanin-like 3 domain occupies 468 to 598; sequence NATRDTENDG…GGMGIAILDG (131 aa). The Cu cation site is built by H506, H509, and H511. A glycan (N-linked (GlcNAc...) asparagine) is linked at N526. H580, C581, H582, and H586 together coordinate Cu cation.

This sequence belongs to the multicopper oxidase family. The cofactor is Cu cation.

The protein localises to the cell surface. Its pathway is pigment biosynthesis. Laccase; part of the Pks1 gene cluster that mediates the biosynthesis of an anthraquinone derivative pigment that contributes to conidial pigmentation that provides protection from UV radiation, heat and cold stress. The polyketide synthase Pks1 produces 1-acetyl-2,4,6,8-tetrahydroxy-9,10-anthraquinone though condensation of acetyl-CoA with malonyl-CoA. The dehydratase EthD and the laccase Mlac1 further convert the anthraquinone derivative into the final conidial pigment. The protein is Laccase 1 of Metarhizium robertsii (strain ARSEF 23 / ATCC MYA-3075) (Metarhizium anisopliae (strain ARSEF 23)).